The primary structure comprises 639 residues: tRNA uridine 5-carboxymethylaminomethyl modification enzyme MnmG (639 aa).

FAD-binding positions include 13–18 (GGGHAG), V125, and S180. Position 273-287 (273-287 (GPRYCPSIEDKVVRF)) interacts with NAD(+). FAD is bound at residue Q370. The segment at 620–639 (KRQGGNGPQSPRPDDGRARA) is disordered.

Belongs to the MnmG family. In terms of assembly, homodimer. Heterotetramer of two MnmE and two MnmG subunits. FAD serves as cofactor.

It localises to the cytoplasm. Its function is as follows. NAD-binding protein involved in the addition of a carboxymethylaminomethyl (cmnm) group at the wobble position (U34) of certain tRNAs, forming tRNA-cmnm(5)s(2)U34. The chain is tRNA uridine 5-carboxymethylaminomethyl modification enzyme MnmG from Thioalkalivibrio sulfidiphilus (strain HL-EbGR7).